A 353-amino-acid polypeptide reads, in one-letter code: Nucleotide-binding protein sce5766 (353 aa).

27 to 34 (GLSGAGKS) serves as a coordination point for ATP. Position 76–79 (76–79 (DVRV)) interacts with GTP. The segment at 310–353 (SGVPSGVGEGMAGAPGVDLRLAQPGATPSEPRPASDTSVTGGER) is disordered. Polar residues predominate over residues 344 to 353 (SDTSVTGGER).

It belongs to the RapZ-like family.

In terms of biological role, displays ATPase and GTPase activities. This is Nucleotide-binding protein sce5766 from Sorangium cellulosum (strain So ce56) (Polyangium cellulosum (strain So ce56)).